The sequence spans 601 residues: Aspartate--tRNA ligase (601 aa).

Glu-183 contributes to the L-aspartate binding site. Positions 207–210 (QIFK) are aspartate. Residue Arg-229 participates in L-aspartate binding. Residues 229-231 (RDE) and Gln-238 each bind ATP. His-457 contacts L-aspartate. ATP is bound at residue Glu-497. Arg-504 contacts L-aspartate. Residue 549 to 552 (GIDR) coordinates ATP.

Belongs to the class-II aminoacyl-tRNA synthetase family. Type 1 subfamily. As to quaternary structure, homodimer.

Its subcellular location is the cytoplasm. It carries out the reaction tRNA(Asp) + L-aspartate + ATP = L-aspartyl-tRNA(Asp) + AMP + diphosphate. Catalyzes the attachment of L-aspartate to tRNA(Asp) in a two-step reaction: L-aspartate is first activated by ATP to form Asp-AMP and then transferred to the acceptor end of tRNA(Asp). This Leptospira interrogans serogroup Icterohaemorrhagiae serovar Lai (strain 56601) protein is Aspartate--tRNA ligase.